The primary structure comprises 1365 residues: Histone-lysine N-methyltransferase NSD2 (1365 aa).

Residues T110 and T114 each carry the phosphothreonine modification. S121 carries the phosphoserine modification. The tract at residues 149–169 (ADVSQSEENEQKSDNKTRRNR) is disordered. Position 172 is a phosphoserine (S172). The PWWP 1 domain maps to 222 to 286 (VGDLVWSKVS…FEKSLVAFEG (65 aa)). Disordered regions lie at residues 373-455 (MVDS…RKGD), 513-567 (QSEE…DKTA), and 594-658 (CKPL…SKKS). S376 carries the post-translational modification Phosphoserine. T422 carries the phosphothreonine modification. Residues 453-521 (KGDSAAQFLV…AQSEEDSGNG (69 aa)) constitute a DNA-binding region (HMG box). Over residues 552–567 (DKHSLRKRETITDKTA) the composition is skewed to basic and acidic residues. Positions 603–623 (ASATASSALGFNKSSSPSASL) are enriched in polar residues. The segment covering 632–648 (PGDEPSESPYESADETQ) has biased composition (acidic residues). PHD-type zinc fingers lie at residues 667-713 (EYVC…CASG), 714-770 (IHSC…CHAS), and 831-875 (VSWC…CRAG). The 63-residue stretch at 880–942 (FQDIIWVKLG…QARVFPYMEG (63 aa)) folds into the PWWP 2 domain. The AWS domain occupies 1011–1061 (SEIPKCNCKPTDENPCGSDSECLNRMLMFECHPQVCPAGEYCQNQCFTKRQ). C1016, C1018, C1026, C1032, C1041, C1046, and C1052 together coordinate Zn(2+). Residues 1063–1180 (PETKIIKTDG…AGTELTFNYN (118 aa)) enclose the SET domain. S-adenosyl-L-methionine-binding positions include W1075, 1115-1118 (THFY), and 1141-1142 (NH). Position 1144 (C1144) interacts with Zn(2+). S-adenosyl-L-methionine is bound at residue N1186. One can recognise a Post-SET domain in the interval 1187–1203 (EKTVCRCGASNCSGFLG). C1191 is a Zn(2+) binding site. Residue R1192 participates in S-adenosyl-L-methionine binding. C1193 and C1198 together coordinate Zn(2+). Residues 1206–1232 (PKTSASLSSEEKGKKAKKKTRRRRAKG) are disordered. The segment covering 1219–1230 (KKAKKKTRRRRA) has biased composition (basic residues). The PHD-type 4; atypical zinc-finger motif lies at 1239–1286 (EDECFRCGDGGQLVLCDRKFCTKAYHLSCLGLGKRPFGKWECPWHHCD). Residues 1329 to 1365 (RADSSSSTKTEKPFPESLKSKGKRKKRRCWRRVTDGK) are disordered. Over residues 1348–1359 (SKGKRKKRRCWR) the composition is skewed to basic residues.

This sequence belongs to the class V-like SAM-binding methyltransferase superfamily. Histone-lysine methyltransferase family. SET2 subfamily. Interacts with HDAC1. Interacts (via PHD-type zinc fingers 1, 2 and 3) with SALL1. Interacts (via PHD-type 1, 2 and 3) with SALL4. Interacts with NANOG. Interacts with OGT. Interacts (via HMG box) with NKX2-5. During B-cell development, expressed in early B2 cell progenitors (pre- and pro-B cells) with a decrease in expression at later stages.

Its subcellular location is the nucleus. It is found in the chromosome. It catalyses the reaction L-lysyl(36)-[histone H3] + S-adenosyl-L-methionine = N(6)-methyl-L-lysyl(36)-[histone H3] + S-adenosyl-L-homocysteine + H(+). The catalysed reaction is L-lysyl(36)-[histone H3] + 2 S-adenosyl-L-methionine = N(6),N(6)-dimethyl-L-lysyl(36)-[histone H3] + 2 S-adenosyl-L-homocysteine + 2 H(+). Functionally, histone methyltransferase which specifically dimethylates nucleosomal histone H3 at 'Lys-36' (H3K36me2). Also monomethylates nucleosomal histone H3 at 'Lys-36' (H3K36me) in vitro. Does not trimethylate nucleosomal histone H3 at 'Lys-36' (H3K36me3). However, specifically trimethylates histone H3 at 'Lys-36' (H3K36me3) at euchromatic regions in embryonic stem (ES) cells. By methylating histone H3 at 'Lys-36', involved in the regulation of gene transcription during various biological processes. In ES cells, associates with developmental transcription factors such as SALL1 and represses inappropriate gene transcription mediated by histone deacetylation. During heart development, associates with transcription factor NKX2-5 to repress transcription of NKX2-5 target genes. Plays an essential role in adipogenesis, by regulating expression of genes involved in pre-adipocyte differentiation. During T-cell receptor (TCR) and CD28-mediated T-cell activation, promotes the transcription of transcription factor BCL6 which is required for follicular helper T (Tfh) cell differentiation. During B-cell development, required for the generation of the B1 lineage. During B2 cell activation, may contribute to the control of isotype class switch recombination (CRS), splenic germinal center formation, and the humoral immune response. Plays a role in class switch recombination of the immunoglobulin heavy chain (IgH) locus during B-cell activation. By regulating the methylation of histone H3 at 'Lys-36' and histone H4 at 'Lys-20' at the IgH locus, involved in TP53BP1 recruitment to the IgH switch region and promotes the transcription of IgA. Histone methyltransferase which specifically dimethylates nucleosomal histone H3 at 'Lys-36' (H3K36me2). Mono-, di- and tri-methylates histone H3 at 'Lys-27' (H3K27me, H3K27me2, H3K27me3). Methylation of histone H3 at 'Lys-27' is controversial. May act as a transcription regulator that binds DNA and suppresses IL5 transcription through HDAC recruitment. This is Histone-lysine N-methyltransferase NSD2 (Nsd2) from Mus musculus (Mouse).